Here is a 240-residue protein sequence, read N- to C-terminus: Protein FANTASTIC FOUR 2 (240 aa).

Disordered stretches follow at residues Thr89–Lys124 and Leu177–Leu229. Positions Asn117–Leu171 constitute an FAF domain. The segment covering Glu184–Glu200 has biased composition (acidic residues). Over residues Gly207–Arg216 the composition is skewed to basic residues. Residues Arg217–Lys226 are compositionally biased toward basic and acidic residues.

Belongs to the fantastic four family. In terms of tissue distribution, expressed in the shoot apex, stamens, carpels and young siliques. Detected in provascular and vascular tissue, and in the center of the vegetative and inflorescence meristems. Expressed in the funiculus. In roots and leaves, predominantly expressed in phloem.

Functionally, regulates the size of the shoot meristem by modulating the CLV3-WUS feedback loop. Can repress WUS but is under negative control by CLV3. The polypeptide is Protein FANTASTIC FOUR 2 (FAF2) (Arabidopsis thaliana (Mouse-ear cress)).